A 704-amino-acid chain; its full sequence is Pentatricopeptide repeat-containing protein At4g28010 (704 aa).

PPR repeat units follow at residues 71-105 (LAFAGNNLMAKLVRSRNHELAFSFYRKMLETDTFI), 106-140 (NFVSLSGLLECYVQMRKTGFAFGVLALMLKRGFAF), 141-175 (NVYNHNILLKGLCRNLECGKAVSLLREMRRNSLMP), 176-210 (DVFSYNTVIRGFCEGKELEKALELANEMKGSGCSW), 211-245 (SLVTWGILIDAFCKAGKMDEAMGFLKEMKFMGLEA), 246-280 (DLVVYTSLIRGFCDCGELDRGKALFDEVLERGDSP), 281-315 (CAITYNTLIRGFCKLGQLKEASEIFEFMIERGVRP), 316-350 (NVYTYTGLIDGLCGVGKTKEALQLLNLMIEKDEEP), 351-385 (NAVTYNIIINKLCKDGLVADAVEIVELMKKRRTRP), 386-416 (DNITYNILLGGLCAKGDLDEASKLLYLMLKD), 423-453 (DVISYNALIHGLCKENRLHQALDIYDLLVEK), 458-492 (DRVTTNILLNSTLKAGDVNKAMELWKQISDSKIVR), 493-527 (NSDTYTAMIDGFCKTGMLNVAKGLLCKMRVSELQP), 528-562 (SVFDYNCLLSSLCKEGSLDQAWRLFEEMQRDNNFP), 563-597 (DVVSFNIMIDGSLKAGDIKSAESLLVGMSRAGLSP), 598-632 (DLFTYSKLINRFLKLGYLDEAISFFDKMVDSGFEP), and 633-667 (DAHICDSVLKYCISQGETDKLTELVKKLVDKDIVL).

This sequence belongs to the PPR family. P subfamily.

The sequence is that of Pentatricopeptide repeat-containing protein At4g28010 from Arabidopsis thaliana (Mouse-ear cress).